A 255-amino-acid chain; its full sequence is UPF0246 protein Caul_4480 (255 aa).

Belongs to the UPF0246 family.

The chain is UPF0246 protein Caul_4480 from Caulobacter sp. (strain K31).